Reading from the N-terminus, the 84-residue chain is Exodeoxyribonuclease 7 small subunit (84 aa).

The protein belongs to the XseB family. Heterooligomer composed of large and small subunits.

It localises to the cytoplasm. It carries out the reaction Exonucleolytic cleavage in either 5'- to 3'- or 3'- to 5'-direction to yield nucleoside 5'-phosphates.. Its function is as follows. Bidirectionally degrades single-stranded DNA into large acid-insoluble oligonucleotides, which are then degraded further into small acid-soluble oligonucleotides. This Herminiimonas arsenicoxydans protein is Exodeoxyribonuclease 7 small subunit.